Here is a 380-residue protein sequence, read N- to C-terminus: PqqA peptide cyclase (380 aa).

Residues 12-228 (FGIPLAVLLE…EEARERLKGR (217 aa)) enclose the Radical SAM core domain. Positions 26, 30, and 33 each coordinate [4Fe-4S] cluster.

It belongs to the radical SAM superfamily. PqqE family. In terms of assembly, interacts with PqqD. The interaction is necessary for activity of PqqE. [4Fe-4S] cluster serves as cofactor.

It carries out the reaction [PQQ precursor protein] + S-adenosyl-L-methionine = E-Y cross-linked-[PQQ precursor protein] + 5'-deoxyadenosine + L-methionine + H(+). Its pathway is cofactor biosynthesis; pyrroloquinoline quinone biosynthesis. Its function is as follows. Catalyzes the cross-linking of a glutamate residue and a tyrosine residue in the PqqA protein as part of the biosynthesis of pyrroloquinoline quinone (PQQ). The polypeptide is PqqA peptide cyclase (Bradyrhizobium diazoefficiens (strain JCM 10833 / BCRC 13528 / IAM 13628 / NBRC 14792 / USDA 110)).